The following is a 242-amino-acid chain: MIKMTGVQKFFDDFQALTDINLEVPAGQVVVVLGPSGSGKSTLCRTINRLETIEEGTIEIDGKLLPEEGKDLAKIRADVGMVFQSFNLFPHLTIKDNVTLGPMKVRKMKKSEANEVAMKLLERVGIANQAEKYPAQLSGGQQQRVAIARALAMNPKIMLFDEPTSALDPEMVNEVLDVMASLAKEGMTMVCVTHEMGFARRAADRVLFMSDGAIVEDSDPETFFTNPQTDRAKDFLGKILAH.

In terms of domain architecture, ABC transporter spans 2 to 236 (IKMTGVQKFF…PQTDRAKDFL (235 aa)). 34 to 41 (GPSGSGKS) provides a ligand contact to ATP.

It belongs to the ABC transporter superfamily. The complex is composed of two ATP-binding proteins (GluA), two transmembrane proteins (GluC and GluD) and a solute-binding protein (GluB).

The protein localises to the cell membrane. It catalyses the reaction a polar amino acid(out) + ATP + H2O = a polar amino acid(in) + ADP + phosphate + H(+). It carries out the reaction L-glutamate(out) + ATP + H2O = L-glutamate(in) + ADP + phosphate + H(+). Functionally, part of the ABC transporter complex GluABCD involved in glutamate uptake. Probably responsible for energy coupling to the transport system. In Corynebacterium efficiens (strain DSM 44549 / YS-314 / AJ 12310 / JCM 11189 / NBRC 100395), this protein is Glutamate transport ATP-binding protein GluA.